Here is a 449-residue protein sequence, read N- to C-terminus: Phosphoglucosamine mutase (449 aa).

The Phosphoserine intermediate role is filled by S100. Mg(2+) contacts are provided by S100, D241, D243, and D245. S100 carries the post-translational modification Phosphoserine.

The protein belongs to the phosphohexose mutase family. It depends on Mg(2+) as a cofactor. In terms of processing, activated by phosphorylation.

It carries out the reaction alpha-D-glucosamine 1-phosphate = D-glucosamine 6-phosphate. Its function is as follows. Catalyzes the conversion of glucosamine-6-phosphate to glucosamine-1-phosphate. The chain is Phosphoglucosamine mutase from Geobacillus kaustophilus (strain HTA426).